The primary structure comprises 303 residues: Diaminopimelate epimerase (303 aa).

Positions 15 and 72 each coordinate substrate. Cysteine 81 serves as the catalytic Proton donor. Residues 82–83 (GN), asparagine 169, asparagine 202, and 220–221 (ER) contribute to the substrate site. The Proton acceptor role is filled by cysteine 229. 230 to 231 (GT) lines the substrate pocket.

It belongs to the diaminopimelate epimerase family. Homodimer.

It localises to the cytoplasm. The enzyme catalyses (2S,6S)-2,6-diaminopimelate = meso-2,6-diaminopimelate. Its pathway is amino-acid biosynthesis; L-lysine biosynthesis via DAP pathway; DL-2,6-diaminopimelate from LL-2,6-diaminopimelate: step 1/1. Catalyzes the stereoinversion of LL-2,6-diaminopimelate (L,L-DAP) to meso-diaminopimelate (meso-DAP), a precursor of L-lysine and an essential component of the bacterial peptidoglycan. The protein is Diaminopimelate epimerase of Prochlorococcus marinus (strain MIT 9313).